Here is a 67-residue protein sequence, read N- to C-terminus: uncharacterized protein (67 aa).

This is an uncharacterized protein from Thermoproteus tenax virus 1 (strain KRA1) (TTV1).